Consider the following 379-residue polypeptide: Cytochrome b (379 aa).

Helical transmembrane passes span 33–53, 77–98, 113–133, and 178–198; these read FGSL…FLAM, WLIR…FIHV, WNIG…GYVL, and FFAF…VHLL. Heme b-binding residues include His-83 and His-97. Heme b contacts are provided by His-182 and His-196. His-201 contributes to the a ubiquinone binding site. The next 4 membrane-spanning stretches (helical) occupy residues 226 to 246, 288 to 308, 320 to 340, and 347 to 367; these read IKDL…ALFF, LGGV…PLLN, ITQT…WIGG, and FTMI…ILMP.

Belongs to the cytochrome b family. The cytochrome bc1 complex contains 11 subunits: 3 respiratory subunits (MT-CYB, CYC1 and UQCRFS1), 2 core proteins (UQCRC1 and UQCRC2) and 6 low-molecular weight proteins (UQCRH/QCR6, UQCRB/QCR7, UQCRQ/QCR8, UQCR10/QCR9, UQCR11/QCR10 and a cleavage product of UQCRFS1). This cytochrome bc1 complex then forms a dimer. The cofactor is heme b.

It localises to the mitochondrion inner membrane. Functionally, component of the ubiquinol-cytochrome c reductase complex (complex III or cytochrome b-c1 complex) that is part of the mitochondrial respiratory chain. The b-c1 complex mediates electron transfer from ubiquinol to cytochrome c. Contributes to the generation of a proton gradient across the mitochondrial membrane that is then used for ATP synthesis. The polypeptide is Cytochrome b (MT-CYB) (Akodon dolores (Dolorous grass mouse)).